Here is a 217-residue protein sequence, read N- to C-terminus: Putative cobalt transport protein CbiM (217 aa).

6 consecutive transmembrane segments (helical) span residues 8–28 (LPPE…VYGA), 44–64 (LIAV…PSVT), 74–94 (GIAV…IVLL), 107–127 (TLGA…WIAF), 139–161 (VFAA…LALA), and 181–201 (IFAV…VMLV).

It belongs to the CbiM family. In terms of assembly, forms an energy-coupling factor (ECF) transporter complex composed of an ATP-binding protein (A component, CbiO), a transmembrane protein (T component, CbiQ) and 2 possible substrate-capture proteins (S components, CbiM and CbiN) of unknown stoichimetry.

The protein localises to the cell membrane. The protein operates within cofactor biosynthesis; adenosylcobalamin biosynthesis. Functionally, part of the energy-coupling factor (ECF) transporter complex CbiMNOQ involved in cobalt import. The protein is Putative cobalt transport protein CbiM of Archaeoglobus fulgidus (strain ATCC 49558 / DSM 4304 / JCM 9628 / NBRC 100126 / VC-16).